Reading from the N-terminus, the 544-residue chain is L-aspartate oxidase (544 aa).

FAD-binding positions include 17–20, Lys-39, 46–53, and Asp-221; these read SGGA and STFYAQGG. Arg-288 acts as the Proton donor/acceptor in catalysis. FAD is bound by residues Glu-373 and 389–390; that span reads SL.

Belongs to the FAD-dependent oxidoreductase 2 family. NadB subfamily. Requires FAD as cofactor.

The protein localises to the cytoplasm. The catalysed reaction is L-aspartate + O2 = iminosuccinate + H2O2. Its pathway is cofactor biosynthesis; NAD(+) biosynthesis; iminoaspartate from L-aspartate (oxidase route): step 1/1. Functionally, catalyzes the oxidation of L-aspartate to iminoaspartate, the first step in the de novo biosynthesis of NAD(+). The protein is L-aspartate oxidase of Acinetobacter baylyi (strain ATCC 33305 / BD413 / ADP1).